The chain runs to 81 residues: Small ribosomal subunit protein bS16 (81 aa).

This sequence belongs to the bacterial ribosomal protein bS16 family.

The polypeptide is Small ribosomal subunit protein bS16 (Coprothermobacter proteolyticus (strain ATCC 35245 / DSM 5265 / OCM 4 / BT)).